Here is a 302-residue protein sequence, read N- to C-terminus: Homoserine O-acetyltransferase (302 aa).

Cysteine 142 functions as the Acyl-thioester intermediate in the catalytic mechanism. Residues lysine 163 and serine 192 each contribute to the substrate site. Residue histidine 235 is the Proton acceptor of the active site. Glutamate 237 is a catalytic residue. Arginine 249 is a binding site for substrate.

It belongs to the MetA family.

It localises to the cytoplasm. The catalysed reaction is L-homoserine + acetyl-CoA = O-acetyl-L-homoserine + CoA. It participates in amino-acid biosynthesis; L-methionine biosynthesis via de novo pathway; O-acetyl-L-homoserine from L-homoserine: step 1/1. Transfers an acetyl group from acetyl-CoA to L-homoserine, forming acetyl-L-homoserine. In Bacillus licheniformis (strain ATCC 14580 / DSM 13 / JCM 2505 / CCUG 7422 / NBRC 12200 / NCIMB 9375 / NCTC 10341 / NRRL NRS-1264 / Gibson 46), this protein is Homoserine O-acetyltransferase.